Consider the following 197-residue polypeptide: Recombination protein RecR (197 aa).

The C4-type zinc-finger motif lies at 55–70 (CVQCRDFTESEICTIC). Residues 78–173 (QQLCVVESPA…RPSRLAQGMP (96 aa)) enclose the Toprim domain.

The protein belongs to the RecR family.

May play a role in DNA repair. It seems to be involved in an RecBC-independent recombinational process of DNA repair. It may act with RecF and RecO. The sequence is that of Recombination protein RecR from Xanthomonas oryzae pv. oryzae (strain MAFF 311018).